Here is a 394-residue protein sequence, read N- to C-terminus: uncharacterized protein (394 aa).

A run of 8 helical transmembrane segments spans residues 22–42 (VLVS…VLLH), 60–80 (LALF…LLLF), 81–101 (GFTG…APVA), 231–251 (LHLA…YLWL), 271–291 (GFCA…QLAP), 303–323 (LFLV…GDWP), 328–348 (LLGV…APWL), and 355–375 (ALGP…HAWM).

It is found in the cell membrane. This is an uncharacterized protein from Pseudomonas aeruginosa (strain ATCC 15692 / DSM 22644 / CIP 104116 / JCM 14847 / LMG 12228 / 1C / PRS 101 / PAO1).